A 101-amino-acid chain; its full sequence is RNA-binding protein Hfq (101 aa).

Residues 9–68 (DPFLNALRRERVPVSIYLVNGIKLQGQIESFDQFVILLKNTVSQMVYKHAISTVVPSRPV) enclose the Sm domain. The disordered stretch occupies residues 63–101 (VPSRPVSHHNNNPSGGSSNYHHGSTPASQPSQPESDDAE). Low complexity predominate over residues 70 to 86 (HHNNNPSGGSSNYHHGS).

This sequence belongs to the Hfq family. As to quaternary structure, homohexamer.

Functionally, RNA chaperone that binds small regulatory RNA (sRNAs) and mRNAs to facilitate mRNA translational regulation in response to envelope stress, environmental stress and changes in metabolite concentrations. Also binds with high specificity to tRNAs. This Sodalis glossinidius (strain morsitans) protein is RNA-binding protein Hfq.